A 516-amino-acid polypeptide reads, in one-letter code: Bifunctional purine biosynthesis protein PurH (516 aa).

The region spanning 1-150 (MSDDRKQIKR…KNHPSVAVVV (150 aa)) is the MGS-like domain.

The protein belongs to the PurH family.

It catalyses the reaction (6R)-10-formyltetrahydrofolate + 5-amino-1-(5-phospho-beta-D-ribosyl)imidazole-4-carboxamide = 5-formamido-1-(5-phospho-D-ribosyl)imidazole-4-carboxamide + (6S)-5,6,7,8-tetrahydrofolate. It carries out the reaction IMP + H2O = 5-formamido-1-(5-phospho-D-ribosyl)imidazole-4-carboxamide. It functions in the pathway purine metabolism; IMP biosynthesis via de novo pathway; 5-formamido-1-(5-phospho-D-ribosyl)imidazole-4-carboxamide from 5-amino-1-(5-phospho-D-ribosyl)imidazole-4-carboxamide (10-formyl THF route): step 1/1. It participates in purine metabolism; IMP biosynthesis via de novo pathway; IMP from 5-formamido-1-(5-phospho-D-ribosyl)imidazole-4-carboxamide: step 1/1. In Corynebacterium ammoniagenes (Brevibacterium ammoniagenes), this protein is Bifunctional purine biosynthesis protein PurH.